The sequence spans 348 residues: Dihydroorotase (348 aa).

Positions 14 and 16 each coordinate Zn(2+). Substrate contacts are provided by residues 16 to 18 (HLR) and Asn42. Zn(2+) contacts are provided by Lys100, His137, and His175. Position 100 is an N6-carboxylysine (Lys100). His137 lines the substrate pocket. Leu220 contacts substrate. Asp248 contributes to the Zn(2+) binding site. Residue Asp248 is part of the active site. Residues His252 and Ala264 each coordinate substrate.

It belongs to the metallo-dependent hydrolases superfamily. DHOase family. Class II DHOase subfamily. In terms of assembly, homodimer. Requires Zn(2+) as cofactor.

It carries out the reaction (S)-dihydroorotate + H2O = N-carbamoyl-L-aspartate + H(+). It functions in the pathway pyrimidine metabolism; UMP biosynthesis via de novo pathway; (S)-dihydroorotate from bicarbonate: step 3/3. Its function is as follows. Catalyzes the reversible cyclization of carbamoyl aspartate to dihydroorotate. The chain is Dihydroorotase from Pseudomonas putida (strain ATCC 700007 / DSM 6899 / JCM 31910 / BCRC 17059 / LMG 24140 / F1).